A 300-amino-acid polypeptide reads, in one-letter code: B3 domain-containing protein At5g57720 (300 aa).

The TF-B3 DNA-binding region spans 11-105 (PDFLKIFNSH…SFWVRIHRNG (95 aa)). The disordered stretch occupies residues 115–142 (KIQEISDDEDETNGDGDPHMEEEGDTDE). Over residues 119–129 (ISDDEDETNGD) the composition is skewed to acidic residues.

Its subcellular location is the nucleus. This Arabidopsis thaliana (Mouse-ear cress) protein is B3 domain-containing protein At5g57720.